A 394-amino-acid polypeptide reads, in one-letter code: GDP-mannose transporter (394 aa).

Topologically, residues 1-55 (MADKKNEDFVVRMPDNGTVEKEPFLARSPPARARTGSGGGFGDSFSLARVANNPP) are cytoplasmic. A helical transmembrane segment spans residues 56–76 (AAILAYCLSSISMTVVNKYVV). Residues 77–80 (SGSE) lie on the Lumenal side of the membrane. Residues 81-101 (WNLNFFYLAVQAIVCIIAILF) form a helical membrane-spanning segment. Residues 102-121 (CKQIGIITNLAPFDNVKAKK) are Cytoplasmic-facing. Residues 122-144 (WFPVSLLLVGMIYTSTKALQFLS) traverse the membrane as a helical segment. Topologically, residues 145–149 (VPVYT) are lumenal. Residues 150-167 (IFKNLTIIAIAYGEVLWF) traverse the membrane as a helical segment. At 168 to 173 (GGSVSP) the chain is on the cytoplasmic side. Residues 174-198 (LALVSFGLMVLSSVVAAWADIQSAI) traverse the membrane as a helical segment. The Lumenal portion of the chain corresponds to 199 to 213 (HGGSHPSEASTAIST). A helical membrane pass occupies residues 214–234 (LNAGYAWMGMNVFCSAAYLLG). Topologically, residues 235–246 (MRKVIHKMNFKD) are cytoplasmic. Residues 247-267 (WDSMFYNNLLTIPVLIVCSLI) traverse the membrane as a helical segment. Over 268–287 (AEDWSAANLARNFPIESRNA) the chain is Lumenal. A helical membrane pass occupies residues 288–308 (LFIGMIYSGLGAIFISYCSAW). The Cytoplasmic segment spans residues 309–316 (CIRVTTST). Residues 317 to 339 (TYSMVGALNKLPIAISGLVFFSA) traverse the membrane as a helical segment. The Lumenal segment spans residues 340–342 (PVT). Residues 343-362 (FGSVSAIVIGFISGIVYAWA) form a helical membrane-spanning segment. At 363-394 (KARQSSQAKSALPTQQPVMSASSQSNKDASNS) the chain is on the cytoplasmic side. Residues 371-394 (KSALPTQQPVMSASSQSNKDASNS) form a disordered region. Over residues 374–394 (LPTQQPVMSASSQSNKDASNS) the composition is skewed to polar residues.

Belongs to the TPT transporter family. SLC35D subfamily. In terms of assembly, homooligomer.

The protein resides in the golgi apparatus membrane. It localises to the cytoplasmic vesicle membrane. It is found in the endoplasmic reticulum membrane. In terms of biological role, involved in the import of GDP-mannose from the cytoplasm into the Golgi lumen. This is GDP-mannose transporter (VRG4) from Pyricularia oryzae (strain 70-15 / ATCC MYA-4617 / FGSC 8958) (Rice blast fungus).